Consider the following 180-residue polypeptide: Shikimate kinase (180 aa).

14-19 serves as a coordination point for ATP; it reads GAGKST. Residue Ser18 participates in Mg(2+) binding. The substrate site is built by Asp36, Arg60, and Gly82. ATP is bound at residue Arg120. Arg139 is a binding site for substrate.

The protein belongs to the shikimate kinase family. Monomer. The cofactor is Mg(2+).

The protein localises to the cytoplasm. It catalyses the reaction shikimate + ATP = 3-phosphoshikimate + ADP + H(+). It functions in the pathway metabolic intermediate biosynthesis; chorismate biosynthesis; chorismate from D-erythrose 4-phosphate and phosphoenolpyruvate: step 5/7. In terms of biological role, catalyzes the specific phosphorylation of the 3-hydroxyl group of shikimic acid using ATP as a cosubstrate. The protein is Shikimate kinase of Chromohalobacter salexigens (strain ATCC BAA-138 / DSM 3043 / CIP 106854 / NCIMB 13768 / 1H11).